A 195-amino-acid polypeptide reads, in one-letter code: dCTP deaminase (195 aa).

DCTP is bound by residues 110–115 (RSSLAR), D128, 136–138 (VLE), Y171, K178, and Q182. E138 (proton donor/acceptor) is an active-site residue.

The protein belongs to the dCTP deaminase family. In terms of assembly, homotrimer.

The enzyme catalyses dCTP + H2O + H(+) = dUTP + NH4(+). It participates in pyrimidine metabolism; dUMP biosynthesis; dUMP from dCTP (dUTP route): step 1/2. In terms of biological role, catalyzes the deamination of dCTP to dUTP. This chain is dCTP deaminase, found in Idiomarina loihiensis (strain ATCC BAA-735 / DSM 15497 / L2-TR).